The following is a 245-amino-acid chain: tRNA pseudouridine synthase A (245 aa).

The Nucleophile role is filled by Asp52. Tyr111 is a substrate binding site.

This sequence belongs to the tRNA pseudouridine synthase TruA family. In terms of assembly, homodimer.

The enzyme catalyses uridine(38/39/40) in tRNA = pseudouridine(38/39/40) in tRNA. Formation of pseudouridine at positions 38, 39 and 40 in the anticodon stem and loop of transfer RNAs. This Thermotoga maritima (strain ATCC 43589 / DSM 3109 / JCM 10099 / NBRC 100826 / MSB8) protein is tRNA pseudouridine synthase A.